We begin with the raw amino-acid sequence, 209 residues long: MSIEKQVAEQLLEIKAVFLKPNEPFTWASGIKSPIYCDNRLTLGFPKVRQFIAKSLAEKIKQTFGEIDVVAGTATAGIPHAAWVSDLLDLPMVYVRSKAKEHGKGNQIEGPISKGQKVVVIEDLISTGGSSLKAVEALEEAGAEVVGIAAIFTYGLAKGKQLLEESGTKLVTLTNYDELIEVALNENYVTGEDMETLKEWKKNPEKWGK.

5-phospho-alpha-D-ribose 1-diphosphate is bound by residues Arg-96, Lys-100, His-102, and 122–130 (EDLISTGGS). Residue Ser-126 participates in orotate binding.

The protein belongs to the purine/pyrimidine phosphoribosyltransferase family. PyrE subfamily. In terms of assembly, homodimer. Requires Mg(2+) as cofactor.

It catalyses the reaction orotidine 5'-phosphate + diphosphate = orotate + 5-phospho-alpha-D-ribose 1-diphosphate. It functions in the pathway pyrimidine metabolism; UMP biosynthesis via de novo pathway; UMP from orotate: step 1/2. Functionally, catalyzes the transfer of a ribosyl phosphate group from 5-phosphoribose 1-diphosphate to orotate, leading to the formation of orotidine monophosphate (OMP). This is Orotate phosphoribosyltransferase from Listeria monocytogenes serovar 1/2a (strain ATCC BAA-679 / EGD-e).